A 55-amino-acid chain; its full sequence is Large ribosomal subunit protein bL33 (55 aa).

It belongs to the bacterial ribosomal protein bL33 family.

The sequence is that of Large ribosomal subunit protein bL33 from Methylobacterium nodulans (strain LMG 21967 / CNCM I-2342 / ORS 2060).